The following is a 2245-amino-acid chain: MPEMTENETPTKKQHRKKNRETHNAVERHRKKKINAGINRIGELIPCSPALKQSKNMILDQAFKYITELKRQNDELLLNGGNNEQAEEIKKLRKQLEEIQKENGRYIELLKANDICLYDDPTIHWKGNLKNSKVSVVIPSDQVQKKIIVYSNGNQPGGNSQGTAVQGITFNVSHNLQKQTANVVPVQRTCNLVTPVSISGVYPSENKPWHQTTVPALATNQPVPLCLPAAISAQSILELPTSESESNVLGATSGSLIAVSIESEPHQHHSLHTCLNDQNSSENKNGQENPKVLKKMTPCVTNIPHSSSATATKVHHGNKSCLSIQDFRGDFQNTFVVSVTTTVCSQPPRTAGDSSPMSISKSADLTSTATVVASSAPGVGKATIPISTLSGNPLDNGWTLSCSLPSSSVSTSDLKNINSLTRISSAGNTQTTWTTLQLAGNTIQPLSQTPSSAVTPVLNESGTSPTTSNHSRYVATDINLNNSFPADGQPVEQVVVTLPSCPSLPMQPLIAQPQVKSQPPKNILPLNSAMQVIQMAQPVGSAVNSAPTNQNVIILQPPSTTPCPTVMRAEVSNQTVGQQIVIIQAANQNPLPLLPAPPPGSVRLPINGANTVIGSNNSVQNVPTPQTFGGKHLVHILPRPSSLSASNSTQTFSVTMSNQQPQTISLNGQLFALQPVMSSSGTTNQTPMQIIQPTTSEDPNTNVALNTFGALASLNQSISQMAGQSCVQLSISQPANSQTAANSQTTTANCVSLTTTAAPPVTTDSSATLASTYNLVSTSSMNTVACLPNMKSKRLNKKPGGRKHLAANKSACPLNSVRDVSKLDCPNTEGSAEPPCNDGLLESFPAVLPSVSVSQANSVSVSASHSLGVLSSESLIPESVSKSKSAEKSSPPSQESVTSEHFAMAAAKSKDSTPNLQQETSQDKPPSSLALSDAAKPCASANVLIPSPSDPHILVSQVPGLSSTTSTTSTDCVSEVEIIAEPCRVEQDSSDTMQTTGLLKGQGLTTLLSDLAKKKNPQKSSLSDQMDHPDFSSENPKIVDSSVNLHPKQELLLMNNDDRDPPQHHSCLPDQEVINGSLINGRQADSPMSTSSGSSRSFSVASMLPETTREDVTSNATTNTCDSCTFVEQTDIVALAARAIFDQENLEKGRVGLQADIREVASKPSEASLLEGDPPFKSQIPKESGTGQAEATPNEFNSQGSIEATMERPLEKPSCSLGIKTSNASLQDSTSQPPSITSLSVNNLIHQSSISHPLASCAGLSPTSEQTTVPATVNLTVSSSSYGSQPPGPSLMTEYSQEQLNTMTSTIPNSQIQEPLLKPSHESRKDSAKRAVQDDLLLSSAKRQKHCQPAPLRLESMSLMSRTPDTISDQTQMMVSQIPPNSSNSVVPVSNPAHGDGLTRLFPPSNNFVTPALRQTEVQCGSQPSVAEQQQTQASQHLQALQQHVPAQGVSHLHSNHLYIKQQQQQQQQQQQQQQQQQAGQLRERHHLYQMQHHVPHAESSVHSQPHNVHQQRTLQQEVQMQKKRNLVQGTQTSQLSLQPKHHGTDQSRSKTGQPHPHHQQMQQQMQQHFGSSQTEKSCENPSTSRNHHNHPQNHLNQDIMHQQQDVGSRQQGSGVSSEHVSGHNPMQRLLTSRGLEQQMVSQPSIVTRSSDMTCTPHRPERNRVSSYSAEALIGKTSSNSEQRMGISIQGSRVSDQLEMRSYLDVPRNKSLAIHNMQGRVDHTVASDIRLSDCQTFKPSGASQQPQSNFEVQSSRNNEIGNPVSSLRSMQSQAFRISQNTGPPPIDRQKRLSYPPVQSIPTGNGIPSRDSENTCHQSFMQSLLAPHLSDQVIGSQRSLSEHQRNTQCGPSSAIEYNCPPTHENVHIRRESESQNRESCDMSLGAINTRNSTLNIPFSSSSSSGDIQGRNTSPNVSVQKSNPMRITESHATKGHMNPPVTTNMHGVARPALPHPSVSHGNGDQGPAVRQANSSVPQRSRHPLQDSSGSKIRQPERNRSGNQRQSTVFDPSLPHLPLSTGGSMILGRQQPATEKRGSIVRFMPDSPQVPNDNSGPDQHTLSQNFGFSFIPEGGMNPPINANASFIPQVTQPSATRTPALIPVDPQNTLPSFYPPYSPAHPTLSNDISIPYFPNQMFSNPSTEKVNSGSLNNRFGSILSPPRPVGFAQPSFPLLPDMPPMHMTNSHLSNFNMTSLFPEIATALPDGSAMSPLLTIANSSASDSSKQSSNRPAHNISHILGHDCSSAV.

Residues 1-28 (MPEMTENETPTKKQHRKKNRETHNAVER) are disordered. Residues 18–69 (KNRETHNAVERHRKKKINAGINRIGELIPCSPALKQSKNMILDQAFKYITEL) form the bHLH domain. Residues 77–112 (LLNGGNNEQAEEIKKLRKQLEEIQKENGRYIELLKA) are a coiled coil. Disordered regions lie at residues 271–290 (LHTC…QENP), 447–470 (SQTP…TSNH), 881–900 (SKSK…VTSE), 906–933 (AAKS…ALSD), 1015–1041 (KNPQ…IVDS), 1164–1238 (PSEA…SITS), 1307–1331 (IPNS…AKRA), 1460–1624 (IKQQ…VSGH), 1636–1664 (LEQQ…ERNR), 1736–1764 (TFKP…GNPV), 1777–1815 (ISQN…ENTC), 1834–1859 (GSQR…YNCP), and 1891–2031 (STLN…QPAT). Positions 273-288 (TCLNDQNSSENKNGQE) are enriched in polar residues. The segment covering 881 to 896 (SKSKSAEKSSPPSQES) has biased composition (low complexity). The span at 912–925 (STPNLQQETSQDKP) shows a compositional bias: polar residues. Polar residues-rich tracts occupy residues 1185–1202 (GTGQ…QGSI) and 1219–1238 (IKTS…SITS). The span at 1319-1331 (PSHESRKDSAKRA) shows a compositional bias: basic and acidic residues. Residues 1462 to 1478 (QQQQQQQQQQQQQQQQQ) show a composition bias toward low complexity. 2 stretches are compositionally biased toward polar residues: residues 1501-1520 (SVHS…QEVQ) and 1528-1538 (VQGTQTSQLSL). A compositionally biased stretch (low complexity) spans 1560-1569 (QQMQQQMQQH). Polar residues predominate over residues 1570-1585 (FGSSQTEKSCENPSTS). The span at 1593-1624 (QNHLNQDIMHQQQDVGSRQQGSGVSSEHVSGH) shows a compositional bias: low complexity. The span at 1636–1654 (LEQQMVSQPSIVTRSSDMT) shows a compositional bias: polar residues. Polar residues-rich tracts occupy residues 1904 to 1923 (GDIQ…SNPM) and 1998 to 2007 (SGNQRQSTVF).

Its subcellular location is the nucleus. Its function is as follows. Involved in the negative regulation of epithelial-mesenchymal transition, the process by which epithelial cells lose their polarity and adhesion properties to become mesenchymal cells with enhanced migration and invasive properties. The polypeptide is Basic helix-loop-helix domain-containing protein USF3 (Homo sapiens (Human)).